The chain runs to 262 residues: Small ribosomal subunit protein uS2 (262 aa).

It belongs to the universal ribosomal protein uS2 family.

The polypeptide is Small ribosomal subunit protein uS2 (Roseiflexus sp. (strain RS-1)).